We begin with the raw amino-acid sequence, 307 residues long: NAD(+) hydrolase TcpC (307 aa).

A helical transmembrane segment spans residues 22-42; sequence YNILFFIFLSIAIPFLLFLAW. A TIR domain is found at 169–303; the sequence is THYDFFISHA…EIARELAEIA (135 aa). NAD(+)-binding positions include 178–179 and Glu208; that span reads AK. Residue Glu244 is part of the active site.

In terms of assembly, interacts with host MYD88. Interacts with host TLR4.

The protein resides in the secreted. Its subcellular location is the membrane. The catalysed reaction is NAD(+) + H2O = ADP-D-ribose + nicotinamide + H(+). It catalyses the reaction NADP(+) + H2O = ADP-D-ribose 2'-phosphate + nicotinamide + H(+). Virulence factor that suppresses host Toll-like receptor (TLR)-mediated cytokine production upon infection, thereby increasing bacterial burden in the urinary tract and promoting renal tissue damage. Acts as a NAD(+) hydrolase (NADase) by catalyzing cleavage of NAD(+) into ADP-D-ribose (ADPR) and nicotinamide. Also able to hydrolyze NADP(+), but not other NAD(+)-related molecules. The protein is NAD(+) hydrolase TcpC of Escherichia coli O6:H1 (strain CFT073 / ATCC 700928 / UPEC).